The sequence spans 326 residues: N-acetyl-gamma-glutamyl-phosphate reductase (326 aa).

C155 is a catalytic residue.

It belongs to the NAGSA dehydrogenase family. Type 1 subfamily.

Its subcellular location is the cytoplasm. The catalysed reaction is N-acetyl-L-glutamate 5-semialdehyde + phosphate + NADP(+) = N-acetyl-L-glutamyl 5-phosphate + NADPH + H(+). It participates in amino-acid biosynthesis; L-arginine biosynthesis; N(2)-acetyl-L-ornithine from L-glutamate: step 3/4. Catalyzes the NADPH-dependent reduction of N-acetyl-5-glutamyl phosphate to yield N-acetyl-L-glutamate 5-semialdehyde. This is N-acetyl-gamma-glutamyl-phosphate reductase from Shewanella sediminis (strain HAW-EB3).